We begin with the raw amino-acid sequence, 605 residues long: Tyrosyl-DNA phosphodiesterase 1 (605 aa).

Positions R81–P86 match the Nuclear localization signal motif. H236 (nucleophile) is an active-site residue. K238 is a binding site for substrate. The interaction with DNA stretch occupies residues S379–S382. H466 functions as the Proton donor/acceptor in the catalytic mechanism. K468 contributes to the substrate binding site.

Belongs to the tyrosyl-DNA phosphodiesterase family. As to expression, ubiquitous, with a low level in roots.

The protein localises to the nucleus. Inhibited by vanadate analogs. Its function is as follows. DNA repair enzyme that can remove a variety of covalent adducts from DNA through hydrolysis of a 3'-phosphodiester bond, giving rise to DNA with a free 3' phosphate. Catalyzes the hydrolysis of dead-end complexes between DNA and the topoisomerase I active site tyrosine residue. This is Tyrosyl-DNA phosphodiesterase 1 from Arabidopsis thaliana (Mouse-ear cress).